Reading from the N-terminus, the 171-residue chain is Lipoprotein signal peptidase (171 aa).

The next 3 helical transmembrane spans lie at 8-28 (SFLWLSAVAFVIDLLTKYIVV), 64-84 (WQQYFFILLALAISGMLVYFL), and 99-119 (ALIIGGALANMVDRAYNGFVV). Catalysis depends on residues Asp120 and Asp138. The chain crosses the membrane as a helical span at residues 133–153 (VFNIADIAICIGAGLLVLDAF).

It belongs to the peptidase A8 family.

Its subcellular location is the cell inner membrane. The catalysed reaction is Release of signal peptides from bacterial membrane prolipoproteins. Hydrolyzes -Xaa-Yaa-Zaa-|-(S,diacylglyceryl)Cys-, in which Xaa is hydrophobic (preferably Leu), and Yaa (Ala or Ser) and Zaa (Gly or Ala) have small, neutral side chains.. Its pathway is protein modification; lipoprotein biosynthesis (signal peptide cleavage). In terms of biological role, this protein specifically catalyzes the removal of signal peptides from prolipoproteins. This chain is Lipoprotein signal peptidase, found in Haemophilus influenzae (strain ATCC 51907 / DSM 11121 / KW20 / Rd).